Here is a 283-residue protein sequence, read N- to C-terminus: Aldo-keto reductase Mmcs_1938 (283 aa).

Catalysis depends on tyrosine 58, which acts as the Proton donor. Residues glycine 196, leucine 198, valine 200, isoleucine 236, arginine 238, serine 239, alanine 240, arginine 244, serine 247, asparagine 248, and arginine 274 each contribute to the NADPH site.

The protein belongs to the aldo/keto reductase family.

The protein is Aldo-keto reductase Mmcs_1938 of Mycobacterium sp. (strain MCS).